The chain runs to 179 residues: Large ribosomal subunit protein bL25 (179 aa).

This sequence belongs to the bacterial ribosomal protein bL25 family. CTC subfamily. In terms of assembly, part of the 50S ribosomal subunit; part of the 5S rRNA/L5/L18/L25 subcomplex. Contacts the 5S rRNA. Binds to the 5S rRNA independently of L5 and L18.

Its function is as follows. This is one of the proteins that binds to the 5S RNA in the ribosome where it forms part of the central protuberance. This chain is Large ribosomal subunit protein bL25, found in Desulfitobacterium hafniense (strain DSM 10664 / DCB-2).